Reading from the N-terminus, the 179-residue chain is Guanosine-3',5'-bis(diphosphate) 3'-pyrophosphohydrolase MESH1 (179 aa).

The HD domain maps to 32–127 (YINHPLGVAR…VKLADKLYNL (96 aa)). Residues His35, His61, and Asp62 each coordinate Mn(2+). Catalysis depends on nucleophile residues Glu65 and Asp66. Asp122 is a Mn(2+) binding site.

The protein belongs to the MESH1 family. The cofactor is Mn(2+).

The catalysed reaction is guanosine 3',5'-bis(diphosphate) + H2O = GDP + diphosphate + H(+). PpGpp hydrolyzing enzyme involved in starvation response. The chain is Guanosine-3',5'-bis(diphosphate) 3'-pyrophosphohydrolase MESH1 (hddc3) from Xenopus tropicalis (Western clawed frog).